We begin with the raw amino-acid sequence, 157 residues long: UPF0225 protein PSPTO_4127 (157 aa).

The protein belongs to the UPF0225 family.

This chain is UPF0225 protein PSPTO_4127, found in Pseudomonas syringae pv. tomato (strain ATCC BAA-871 / DC3000).